The following is a 484-amino-acid chain: Ribosomal RNA small subunit methyltransferase F (484 aa).

S-adenosyl-L-methionine is bound by residues 126 to 132, Glu150, Asp177, and Asp195; that span reads AAAPGSK. The active-site Nucleophile is Cys248.

The protein belongs to the class I-like SAM-binding methyltransferase superfamily. RsmB/NOP family.

It is found in the cytoplasm. It carries out the reaction cytidine(1407) in 16S rRNA + S-adenosyl-L-methionine = 5-methylcytidine(1407) in 16S rRNA + S-adenosyl-L-homocysteine + H(+). Specifically methylates the cytosine at position 1407 (m5C1407) of 16S rRNA. The protein is Ribosomal RNA small subunit methyltransferase F of Pectobacterium atrosepticum (strain SCRI 1043 / ATCC BAA-672) (Erwinia carotovora subsp. atroseptica).